The following is a 196-amino-acid chain: Small nuclear ribonucleoprotein-associated protein B (196 aa).

A Sm domain is found at Ala-7 to Pro-101. The Nuclear localization signal motif lies at Lys-105 to Lys-132. A compositionally biased stretch (basic and acidic residues) spans Arg-108 to Gln-118. The disordered stretch occupies residues Arg-108 to Lys-196. Polar residues predominate over residues Asn-140–Pro-181.

Belongs to the snRNP SmB/SmN family. In terms of assembly, component of the Sm core complex, present in spliceosomal snRNP U1, U2, U4/U6 and U5. The core complex contains SMB1, SMD1, SMD2, SMD3, SME1, SMX3 and SMX2 (Sm proteins B, D1, D2, D3, E, F and G, respectively), and is probably a heptameric ring structure. SMB1 specifically interacts with SMD3. Belongs to the CWC complex (or CEF1-associated complex), a spliceosome sub-complex reminiscent of a late-stage spliceosome composed of the U2, U5 and U6 snRNAs and at least BUD13, BUD31, BRR2, CDC40, CEF1, CLF1, CUS1, CWC2, CWC15, CWC21, CWC22, CWC23, CWC24, CWC25, CWC27, ECM2, HSH155, IST3, ISY1, LEA1, MSL1, NTC20, PRP8, PRP9, PRP11, PRP19, PRP21, PRP22, PRP45, PRP46, SLU7, SMB1, SMD1, SMD2, SMD3, SMX2, SMX3, SNT309, SNU114, SPP2, SYF1, SYF2, RSE1 and YJU2. Component of the U4/U6-U5 tri-snRNP complex composed of the U4, U6 and U5 snRNAs and at least PRP3, PRP4, PRP6, PRP8, PRP18, PRP38, SNU13, SNU23, SNU66, SNU114, SPP381, SMB1, SMD1, SMD2, SMD3, SMX2, SMX3, LSM2, LSM3, LSM4, LSM5, LSM6, LSM7, LSM8, BRR2 and DIB1. Interacts with the trimethylguanosine synthase TGS1.

The protein resides in the nucleus. Its subcellular location is the cytoplasm. Its function is as follows. Plays a role in pre-mRNA splicing as a core component of the spliceosomal U1, U2, U4 and U5 small nuclear ribonucleoproteins (snRNPs), the building blocks of the spliceosome. The polypeptide is Small nuclear ribonucleoprotein-associated protein B (SMB1) (Saccharomyces cerevisiae (strain ATCC 204508 / S288c) (Baker's yeast)).